The sequence spans 191 residues: Dephospho-CoA kinase (191 aa).

One can recognise a DPCK domain in the interval 3 to 191; it reads AIGITGSYAS…KLIKNLECQV (189 aa). 11-16 lines the ATP pocket; it reads ASGKTF.

This sequence belongs to the CoaE family.

The protein localises to the cytoplasm. It carries out the reaction 3'-dephospho-CoA + ATP = ADP + CoA + H(+). The protein operates within cofactor biosynthesis; coenzyme A biosynthesis; CoA from (R)-pantothenate: step 5/5. Catalyzes the phosphorylation of the 3'-hydroxyl group of dephosphocoenzyme A to form coenzyme A. The protein is Dephospho-CoA kinase of Rickettsia typhi (strain ATCC VR-144 / Wilmington).